A 394-amino-acid polypeptide reads, in one-letter code: GTPase Obg (394 aa).

In terms of domain architecture, Obg spans 4 to 162; the sequence is SNFVDYVKIY…LMVILELKLL (159 aa). The region spanning 163-329 is the OBG-type G domain; the sequence is ADVGLVGFPN…LKDILWTELN (167 aa). GTP-binding positions include 169 to 176, 194 to 198, 216 to 219, 283 to 286, and 310 to 312; these read GFPNAGKS, FTTLE, DIPG, TKSD, and SSV. Mg(2+)-binding residues include S176 and T196. Residues 358–394 are disordered; sequence KDMGEDEDFEYEYEEDADDDFDYEYEDENWDEEEEKK. Residues 361-394 are compositionally biased toward acidic residues; that stretch reads GEDEDFEYEYEEDADDDFDYEYEDENWDEEEEKK.

It belongs to the TRAFAC class OBG-HflX-like GTPase superfamily. OBG GTPase family. In terms of assembly, monomer. Mg(2+) serves as cofactor.

The protein localises to the cytoplasm. Its function is as follows. An essential GTPase which binds GTP, GDP and possibly (p)ppGpp with moderate affinity, with high nucleotide exchange rates and a fairly low GTP hydrolysis rate. Plays a role in control of the cell cycle, stress response, ribosome biogenesis and in those bacteria that undergo differentiation, in morphogenesis control. This Phocaeicola vulgatus (strain ATCC 8482 / DSM 1447 / JCM 5826 / CCUG 4940 / NBRC 14291 / NCTC 11154) (Bacteroides vulgatus) protein is GTPase Obg.